The primary structure comprises 380 residues: tRNA-specific 2-thiouridylase MnmA (380 aa).

Residues 9 to 16 (GVSGGVDS) and Met35 contribute to the ATP site. Positions 94–96 (NPD) are interaction with target base in tRNA. Cys99 serves as the catalytic Nucleophile. The cysteines at positions 99 and 195 are disulfide-linked. ATP is bound at residue Gly123. Residues 145–147 (KDQ) are interaction with tRNA. Catalysis depends on Cys195, which acts as the Cysteine persulfide intermediate. An interaction with tRNA region spans residues 308–309 (RY).

Belongs to the MnmA/TRMU family.

It localises to the cytoplasm. The catalysed reaction is S-sulfanyl-L-cysteinyl-[protein] + uridine(34) in tRNA + AH2 + ATP = 2-thiouridine(34) in tRNA + L-cysteinyl-[protein] + A + AMP + diphosphate + H(+). Functionally, catalyzes the 2-thiolation of uridine at the wobble position (U34) of tRNA, leading to the formation of s(2)U34. In Stenotrophomonas maltophilia (strain K279a), this protein is tRNA-specific 2-thiouridylase MnmA.